We begin with the raw amino-acid sequence, 232 residues long: Small ribosomal subunit protein uS3 (232 aa).

One can recognise a KH type-2 domain in the interval 39–107 (VRQFLTKELA…PAQINIAEVR (69 aa)).

The protein belongs to the universal ribosomal protein uS3 family. As to quaternary structure, part of the 30S ribosomal subunit. Forms a tight complex with proteins S10 and S14.

Functionally, binds the lower part of the 30S subunit head. Binds mRNA in the 70S ribosome, positioning it for translation. The protein is Small ribosomal subunit protein uS3 of Yersinia pestis bv. Antiqua (strain Antiqua).